The chain runs to 187 residues: Peptidyl-tRNA hydrolase (187 aa).

Tyrosine 18 is a tRNA binding site. The Proton acceptor role is filled by histidine 23. TRNA contacts are provided by phenylalanine 65, asparagine 67, and asparagine 113.

The protein belongs to the PTH family. Monomer.

The protein resides in the cytoplasm. It catalyses the reaction an N-acyl-L-alpha-aminoacyl-tRNA + H2O = an N-acyl-L-amino acid + a tRNA + H(+). Its function is as follows. Hydrolyzes ribosome-free peptidyl-tRNAs (with 1 or more amino acids incorporated), which drop off the ribosome during protein synthesis, or as a result of ribosome stalling. Catalyzes the release of premature peptidyl moieties from peptidyl-tRNA molecules trapped in stalled 50S ribosomal subunits, and thus maintains levels of free tRNAs and 50S ribosomes. This is Peptidyl-tRNA hydrolase from Coxiella burnetii (strain CbuK_Q154) (Coxiella burnetii (strain Q154)).